The sequence spans 380 residues: Lipid-A-disaccharide synthase (380 aa).

It belongs to the LpxB family.

It catalyses the reaction a lipid X + a UDP-2-N,3-O-bis[(3R)-3-hydroxyacyl]-alpha-D-glucosamine = a lipid A disaccharide + UDP + H(+). It functions in the pathway bacterial outer membrane biogenesis; LPS lipid A biosynthesis. Functionally, condensation of UDP-2,3-diacylglucosamine and 2,3-diacylglucosamine-1-phosphate to form lipid A disaccharide, a precursor of lipid A, a phosphorylated glycolipid that anchors the lipopolysaccharide to the outer membrane of the cell. In Azotobacter vinelandii (strain DJ / ATCC BAA-1303), this protein is Lipid-A-disaccharide synthase.